A 57-amino-acid polypeptide reads, in one-letter code: Sperm protamine P1-type (57 aa).

The segment at 1–57 (MARYRHNRSRSRSRHRRRRRGHRGGRYRRRRRRGRYGHRRHHRGHSRRRRKRRRSRH) is disordered.

This sequence belongs to the protamine P1 family. As to expression, testis.

The protein resides in the nucleus. The protein localises to the chromosome. Functionally, protamines substitute for histones in the chromatin of sperm during the haploid phase of spermatogenesis. They compact sperm DNA into a highly condensed, stable and inactive complex. This Alligator mississippiensis (American alligator) protein is Sperm protamine P1-type.